A 162-amino-acid polypeptide reads, in one-letter code: Putative auxin-responsive protein IAA28 (162 aa).

The region spanning 23–118 is the PB1 domain; the sequence is SRFVKVFMHG…TVKRIYIVPA (96 aa). Positions 122 to 141 are disordered; that stretch reads NESEYQEEEEDNAAAAATAD.

The protein belongs to the Aux/IAA family. Homodimers and heterodimers.

It localises to the nucleus. Functionally, aux/IAA proteins are short-lived transcriptional factors that function as repressors of early auxin response genes at low auxin concentrations. The chain is Putative auxin-responsive protein IAA28 (IAA28) from Oryza sativa subsp. japonica (Rice).